The chain runs to 383 residues: Putative F-box protein At1g77650 (383 aa).

Residues 1–47 enclose the F-box domain; the sequence is MAFLSLPSDVVEEFLFKTPIESLVLCKPTCKQLYALCNDKRFIYNHL.

This Arabidopsis thaliana (Mouse-ear cress) protein is Putative F-box protein At1g77650.